A 389-amino-acid chain; its full sequence is Cellobiose 2-epimerase (389 aa).

It belongs to the cellobiose 2-epimerase family. In terms of assembly, monomer.

The enzyme catalyses D-cellobiose = beta-D-glucosyl-(1-&gt;4)-D-mannopyranose. Catalyzes the reversible epimerization of cellobiose to 4-O-beta-D-glucopyranosyl-D-mannose (Glc-Man). Catalyzes epimerization but also isomerization for beta-1,4- and alpha-1,4-gluco-oligosaccharides. Can use cellobiose, lactose, cellotriose, maltose and maltotriose. This Dictyoglomus turgidum (strain DSM 6724 / Z-1310) protein is Cellobiose 2-epimerase.